We begin with the raw amino-acid sequence, 324 residues long: Anthranilate phosphoribosyltransferase (324 aa).

5-phospho-alpha-D-ribose 1-diphosphate is bound by residues G72, 75–76 (GD), S80, 82–85 (NVST), 99–107 (KHGNVSITS), and S111. G72 is a binding site for anthranilate. S84 is a binding site for Mg(2+). N102 is a binding site for anthranilate. Residue R157 participates in anthranilate binding. Residues D215 and E216 each contribute to the Mg(2+) site.

Belongs to the anthranilate phosphoribosyltransferase family. As to quaternary structure, homodimer. Mg(2+) is required as a cofactor.

The enzyme catalyses N-(5-phospho-beta-D-ribosyl)anthranilate + diphosphate = 5-phospho-alpha-D-ribose 1-diphosphate + anthranilate. Its pathway is amino-acid biosynthesis; L-tryptophan biosynthesis; L-tryptophan from chorismate: step 2/5. Its function is as follows. Catalyzes the transfer of the phosphoribosyl group of 5-phosphorylribose-1-pyrophosphate (PRPP) to anthranilate to yield N-(5'-phosphoribosyl)-anthranilate (PRA). The sequence is that of Anthranilate phosphoribosyltransferase from Pyrococcus abyssi (strain GE5 / Orsay).